The chain runs to 336 residues: Probable RNA methyltransferase Anae109_4379 (336 aa).

Glu86 acts as the Proton acceptor in catalysis. The Radical SAM core domain occupies 93-322 (FDTHHTVCLS…PIVRRYSGGQ (230 aa)). Cys100 and Cys328 are oxidised to a cystine. Residues Cys107, Cys111, and Cys114 each contribute to the [4Fe-4S] cluster site. S-adenosyl-L-methionine-binding positions include 154 to 155 (GE), Ser186, and 209 to 211 (SLN). Cys328 functions as the S-methylcysteine intermediate in the catalytic mechanism.

Belongs to the radical SAM superfamily. RlmN family. It depends on [4Fe-4S] cluster as a cofactor.

It is found in the cytoplasm. This is Probable RNA methyltransferase Anae109_4379 from Anaeromyxobacter sp. (strain Fw109-5).